The chain runs to 75 residues: Exodeoxyribonuclease 7 small subunit (75 aa).

It belongs to the XseB family. Heterooligomer composed of large and small subunits.

The protein resides in the cytoplasm. It catalyses the reaction Exonucleolytic cleavage in either 5'- to 3'- or 3'- to 5'-direction to yield nucleoside 5'-phosphates.. In terms of biological role, bidirectionally degrades single-stranded DNA into large acid-insoluble oligonucleotides, which are then degraded further into small acid-soluble oligonucleotides. In Listeria monocytogenes serotype 4b (strain CLIP80459), this protein is Exodeoxyribonuclease 7 small subunit.